Consider the following 487-residue polypeptide: Sugar transporter ERD6-like 6 (487 aa).

Serine 2 carries the post-translational modification N-acetylserine. The next 12 helical transmembrane spans lie at isoleucine 46 to cysteine 66, valine 89 to alanine 109, lysine 115 to alanine 135, leucine 146 to isoleucine 166, valine 178 to proline 198, isoleucine 201 to proline 221, leucine 284 to phenylalanine 304, alanine 320 to valine 340, leucine 347 to phenylalanine 367, valine 389 to isoleucine 409, isoleucine 425 to leucine 445, and glycine 451 to valine 471.

This sequence belongs to the major facilitator superfamily. Sugar transporter (TC 2.A.1.1) family.

The protein localises to the membrane. In terms of biological role, sugar transporter. This chain is Sugar transporter ERD6-like 6, found in Arabidopsis thaliana (Mouse-ear cress).